A 97-amino-acid chain; its full sequence is Co-chaperonin GroES (97 aa).

This sequence belongs to the GroES chaperonin family. In terms of assembly, heptamer of 7 subunits arranged in a ring. Interacts with the chaperonin GroEL.

It is found in the cytoplasm. In terms of biological role, together with the chaperonin GroEL, plays an essential role in assisting protein folding. The GroEL-GroES system forms a nano-cage that allows encapsulation of the non-native substrate proteins and provides a physical environment optimized to promote and accelerate protein folding. GroES binds to the apical surface of the GroEL ring, thereby capping the opening of the GroEL channel. The sequence is that of Co-chaperonin GroES from Pseudomonas aeruginosa (strain LESB58).